The chain runs to 636 residues: Threonine--tRNA ligase (636 aa).

The TGS domain occupies 1 to 61 (MPVITLPDGS…TQDVSLSIIT (61 aa)). The interval 242-533 (DHRKLGKKFD…LIEEYEGAFP (292 aa)) is catalytic. The Zn(2+) site is built by Cys-333, His-384, and His-510.

The protein belongs to the class-II aminoacyl-tRNA synthetase family. As to quaternary structure, homodimer. Requires Zn(2+) as cofactor.

Its subcellular location is the cytoplasm. It carries out the reaction tRNA(Thr) + L-threonine + ATP = L-threonyl-tRNA(Thr) + AMP + diphosphate + H(+). In terms of biological role, catalyzes the attachment of threonine to tRNA(Thr) in a two-step reaction: L-threonine is first activated by ATP to form Thr-AMP and then transferred to the acceptor end of tRNA(Thr). Also edits incorrectly charged L-seryl-tRNA(Thr). The protein is Threonine--tRNA ligase of Saccharophagus degradans (strain 2-40 / ATCC 43961 / DSM 17024).